A 379-amino-acid polypeptide reads, in one-letter code: Probable homogentisate phytyltransferase 2, chloroplastic (379 aa).

The segment at 1 to 39 is disordered; sequence MASLASPPLPCRAAATASRSGRPAPRLLGPPPPPASPLL. The N-terminal 65 residues, 1–65, are a transit peptide targeting the chloroplast; sequence MASLASPPLP…WSRRDAVRVC (65 aa). 8 consecutive transmembrane segments (helical) span residues 121–141, 174–194, 195–215, 220–240, 252–272, 299–319, 328–348, and 361–378; these read WLVF…GYIV, LVVL…GPFI, TSLY…PFRL, VAAF…GVYY, WSSP…VIAI, IAFL…AVAF, TVMV…TWVL, and YYRF…FFPL.

This sequence belongs to the UbiA prenyltransferase family.

The protein localises to the plastid. Its subcellular location is the chloroplast thylakoid membrane. It carries out the reaction phytyl diphosphate + homogentisate + H(+) = 2-methyl-6-phytyl-1,4-benzene-1,4-diol + CO2 + diphosphate. Its pathway is cofactor biosynthesis; tocopherol biosynthesis. Functionally, involved in the synthesis of tocopherol (vitamin E). Catalyzes the condensation of homogentisate and phytyl diphosphate to form dimethylphytylhydrquinone. This is Probable homogentisate phytyltransferase 2, chloroplastic (HPT2) from Oryza sativa subsp. japonica (Rice).